The primary structure comprises 83 residues: Kunitz-type serine protease inhibitor nigrescinin-1 (83 aa).

The signal sequence occupies residues 1-24 (MSSGGLLLLLGLLTLWEALTPVSS). Residues 31-81 (CELPEDSGPCKGLFHVFYYNSDQNQCLEFIYGGCYGNANNFKTIEECKRTC) form the BPTI/Kunitz inhibitor domain. 2 cysteine pairs are disulfide-bonded: cysteine 40–cysteine 64 and cysteine 56–cysteine 77.

The protein belongs to the venom Kunitz-type family. Expressed by the venom gland.

Its subcellular location is the secreted. Its function is as follows. Serine protease inhibitor. In Cryptophis nigrescens (Eastern small-eyed snake), this protein is Kunitz-type serine protease inhibitor nigrescinin-1.